Consider the following 299-residue polypeptide: Oxygen-dependent coproporphyrinogen-III oxidase (299 aa).

A substrate-binding site is contributed by serine 92. Residues histidine 96 and histidine 106 each contribute to the a divalent metal cation site. Histidine 106 functions as the Proton donor in the catalytic mechanism. Substrate is bound at residue 108–110 (NVR). Histidine 145 and histidine 175 together coordinate a divalent metal cation. Residues 240-275 (YVEFNLVWDRGTLFGLQTGGRTESILMSMPPLVRWE) are important for dimerization. 258–260 (GGR) contacts substrate.

The protein belongs to the aerobic coproporphyrinogen-III oxidase family. Homodimer. Requires a divalent metal cation as cofactor.

Its subcellular location is the cytoplasm. It carries out the reaction coproporphyrinogen III + O2 + 2 H(+) = protoporphyrinogen IX + 2 CO2 + 2 H2O. Its pathway is porphyrin-containing compound metabolism; protoporphyrin-IX biosynthesis; protoporphyrinogen-IX from coproporphyrinogen-III (O2 route): step 1/1. Its function is as follows. Involved in the heme biosynthesis. Catalyzes the aerobic oxidative decarboxylation of propionate groups of rings A and B of coproporphyrinogen-III to yield the vinyl groups in protoporphyrinogen-IX. The sequence is that of Oxygen-dependent coproporphyrinogen-III oxidase from Shigella dysenteriae serotype 1 (strain Sd197).